Consider the following 75-residue polypeptide: Rugosin-LK1 (75 aa).

The signal sequence occupies residues 1-22 (MFTMKKSLLFLFFLGTISLSFC). A propeptide spanning residues 23–40 (EEERSADEDDEGEMTEEE) is cleaved from the precursor.

In terms of tissue distribution, expressed by the skin glands.

It is found in the secreted. Functionally, has antimicrobial activity against Gram-positive bacteria S.aureus ATCC 2592 (MIC=10.0 uM), S.aureus ATCC 43300 (MIC=15.0 uM) and B.subtilis (MIC=40.0 uM), against Gram-negative bacteria E.coli ML-35P (MIC=10.0 uM), P.aeruginosa PA01 (MIC=5.0 uM) and P.aeruginosa ATCC 27853 (MIC=5.0 uM) and against fungus C.albicans ATCC 2002 (MIC=10.0 uM). In Limnonectes kuhlii (Kuhl's Creek frog), this protein is Rugosin-LK1.